A 139-amino-acid chain; its full sequence is Large ribosomal subunit protein uL16 (139 aa).

Belongs to the universal ribosomal protein uL16 family. In terms of assembly, part of the 50S ribosomal subunit.

Its function is as follows. Binds 23S rRNA and is also seen to make contacts with the A and possibly P site tRNAs. In Prosthecochloris aestuarii (strain DSM 271 / SK 413), this protein is Large ribosomal subunit protein uL16.